The following is a 979-amino-acid chain: Glycine dehydrogenase (decarboxylating) (979 aa).

Lys-724 is modified (N6-(pyridoxal phosphate)lysine).

It belongs to the GcvP family. As to quaternary structure, the glycine cleavage system is composed of four proteins: P, T, L and H. Requires pyridoxal 5'-phosphate as cofactor.

The enzyme catalyses N(6)-[(R)-lipoyl]-L-lysyl-[glycine-cleavage complex H protein] + glycine + H(+) = N(6)-[(R)-S(8)-aminomethyldihydrolipoyl]-L-lysyl-[glycine-cleavage complex H protein] + CO2. The glycine cleavage system catalyzes the degradation of glycine. The P protein binds the alpha-amino group of glycine through its pyridoxal phosphate cofactor; CO(2) is released and the remaining methylamine moiety is then transferred to the lipoamide cofactor of the H protein. The polypeptide is Glycine dehydrogenase (decarboxylating) (Nostoc punctiforme (strain ATCC 29133 / PCC 73102)).